The chain runs to 258 residues: Leucyl/phenylalanyl-tRNA--protein transferase (258 aa).

Positions 199 to 220 are disordered; that stretch reads GGSDGPAPDQSIGMSSSGGVSD. Positions 209–220 are enriched in low complexity; sequence SIGMSSSGGVSD.

This sequence belongs to the L/F-transferase family.

It is found in the cytoplasm. The enzyme catalyses N-terminal L-lysyl-[protein] + L-leucyl-tRNA(Leu) = N-terminal L-leucyl-L-lysyl-[protein] + tRNA(Leu) + H(+). It catalyses the reaction N-terminal L-arginyl-[protein] + L-leucyl-tRNA(Leu) = N-terminal L-leucyl-L-arginyl-[protein] + tRNA(Leu) + H(+). It carries out the reaction L-phenylalanyl-tRNA(Phe) + an N-terminal L-alpha-aminoacyl-[protein] = an N-terminal L-phenylalanyl-L-alpha-aminoacyl-[protein] + tRNA(Phe). Functions in the N-end rule pathway of protein degradation where it conjugates Leu, Phe and, less efficiently, Met from aminoacyl-tRNAs to the N-termini of proteins containing an N-terminal arginine or lysine. The protein is Leucyl/phenylalanyl-tRNA--protein transferase of Hyphomonas neptunium (strain ATCC 15444).